We begin with the raw amino-acid sequence, 282 residues long: Pantothenate synthetase (282 aa).

ATP is bound at residue 26 to 33 (MGNLHEGH). The active-site Proton donor is the histidine 33. Position 57 (glutamine 57) interacts with (R)-pantoate. A beta-alanine-binding site is contributed by glutamine 57. 144-147 (GQKD) contacts ATP. Glutamine 150 provides a ligand contact to (R)-pantoate. ATP-binding positions include leucine 173 and 181-184 (LSSR).

The protein belongs to the pantothenate synthetase family. In terms of assembly, homodimer.

The protein resides in the cytoplasm. It catalyses the reaction (R)-pantoate + beta-alanine + ATP = (R)-pantothenate + AMP + diphosphate + H(+). The protein operates within cofactor biosynthesis; (R)-pantothenate biosynthesis; (R)-pantothenate from (R)-pantoate and beta-alanine: step 1/1. Its function is as follows. Catalyzes the condensation of pantoate with beta-alanine in an ATP-dependent reaction via a pantoyl-adenylate intermediate. The chain is Pantothenate synthetase from Albidiferax ferrireducens (strain ATCC BAA-621 / DSM 15236 / T118) (Rhodoferax ferrireducens).